The chain runs to 255 residues: Accessory gland-specific peptide 26Aa (255 aa).

An N-terminal signal peptide occupies residues 1–18 (MNQILLCSQILLLLFAVA). The segment at 86–110 (PINNSKSRKNSSTLPSQILTDKPNQ) is disordered. Residues 87-110 (INNSKSRKNSSTLPSQILTDKPNQ) are compositionally biased toward polar residues. Residues asparagine 88, asparagine 95, and asparagine 136 are each glycosylated (N-linked (GlcNAc...) asparagine). Disordered stretches follow at residues 177 to 197 (NAQNARKPTKSCKKRPSKDIA) and 235 to 255 (NNPATDVPTGKSPSEGNPSTT). Basic residues predominate over residues 183 to 192 (KPTKSCKKRP). The segment covering 245–255 (KSPSEGNPSTT) has biased composition (polar residues).

In terms of processing, it undergoes several cleavages as it is secreted and it is further processed in the recipient female. In terms of tissue distribution, main cells of the accessory glands of males.

It localises to the secreted. Its subcellular location is the extracellular space. This protein is transferred from male to female's hemolymph during mating, affecting egglaying and behavior after mating. The protein is Accessory gland-specific peptide 26Aa (Acp26Aa) of Drosophila simulans (Fruit fly).